The following is a 330-amino-acid chain: GTPase Obg (330 aa).

The 159-residue stretch at 1–159 (MHFIDEVKIY…MWIHLSLKLL (159 aa)) folds into the Obg domain. The 168-residue stretch at 160–327 (SDVGLVGLPN…IVKLALETIK (168 aa)) folds into the OBG-type G domain. GTP is bound by residues 166–173 (GLPNAGKS), 191–195 (FTTLV), 212–215 (DIPG), 279–282 (NKCD), and 308–310 (STC). Mg(2+) is bound by residues S173 and T193.

This sequence belongs to the TRAFAC class OBG-HflX-like GTPase superfamily. OBG GTPase family. Monomer. The cofactor is Mg(2+).

It localises to the cytoplasm. Its function is as follows. An essential GTPase which binds GTP, GDP and possibly (p)ppGpp with moderate affinity, with high nucleotide exchange rates and a fairly low GTP hydrolysis rate. Plays a role in control of the cell cycle, stress response, ribosome biogenesis and in those bacteria that undergo differentiation, in morphogenesis control. The protein is GTPase Obg of Rickettsia conorii (strain ATCC VR-613 / Malish 7).